Consider the following 158-residue polypeptide: NAD(P)H-quinone oxidoreductase subunit N (158 aa).

The protein belongs to the complex I NdhN subunit family. In terms of assembly, NDH-1 can be composed of about 15 different subunits; different subcomplexes with different compositions have been identified which probably have different functions.

It is found in the cellular thylakoid membrane. The enzyme catalyses a plastoquinone + NADH + (n+1) H(+)(in) = a plastoquinol + NAD(+) + n H(+)(out). It catalyses the reaction a plastoquinone + NADPH + (n+1) H(+)(in) = a plastoquinol + NADP(+) + n H(+)(out). Functionally, NDH-1 shuttles electrons from an unknown electron donor, via FMN and iron-sulfur (Fe-S) centers, to quinones in the respiratory and/or the photosynthetic chain. The immediate electron acceptor for the enzyme in this species is believed to be plastoquinone. Couples the redox reaction to proton translocation, and thus conserves the redox energy in a proton gradient. Cyanobacterial NDH-1 also plays a role in inorganic carbon-concentration. The polypeptide is NAD(P)H-quinone oxidoreductase subunit N (Rippkaea orientalis (strain PCC 8801 / RF-1) (Cyanothece sp. (strain PCC 8801))).